Here is a 171-residue protein sequence, read N- to C-terminus: 2-C-methyl-D-erythritol 2,4-cyclodiphosphate synthase (171 aa).

Asp-8 and His-10 together coordinate a divalent metal cation. Residues Asp-8–His-10 and His-34–Ser-35 each bind 4-CDP-2-C-methyl-D-erythritol 2-phosphate. His-42 serves as a coordination point for a divalent metal cation. 4-CDP-2-C-methyl-D-erythritol 2-phosphate-binding positions include Asp-56–Gly-58, Phe-61–Asp-65, Thr-132–Glu-135, Phe-139, and Arg-142.

The protein belongs to the IspF family. In terms of assembly, homotrimer. Requires a divalent metal cation as cofactor.

The catalysed reaction is 4-CDP-2-C-methyl-D-erythritol 2-phosphate = 2-C-methyl-D-erythritol 2,4-cyclic diphosphate + CMP. The protein operates within isoprenoid biosynthesis; isopentenyl diphosphate biosynthesis via DXP pathway; isopentenyl diphosphate from 1-deoxy-D-xylulose 5-phosphate: step 4/6. Functionally, involved in the biosynthesis of isopentenyl diphosphate (IPP) and dimethylallyl diphosphate (DMAPP), two major building blocks of isoprenoid compounds. Catalyzes the conversion of 4-diphosphocytidyl-2-C-methyl-D-erythritol 2-phosphate (CDP-ME2P) to 2-C-methyl-D-erythritol 2,4-cyclodiphosphate (ME-CPP) with a corresponding release of cytidine 5-monophosphate (CMP). The protein is 2-C-methyl-D-erythritol 2,4-cyclodiphosphate synthase of Geotalea daltonii (strain DSM 22248 / JCM 15807 / FRC-32) (Geobacter daltonii).